The primary structure comprises 392 residues: Phosphoglycerate kinase (392 aa).

Substrate-binding positions include 21–23 (DFN), Arg-36, 59–62 (HLGR), Arg-113, and Arg-146. Residues Lys-197, Glu-319, and 345–348 (GGDT) each bind ATP.

The protein belongs to the phosphoglycerate kinase family. In terms of assembly, monomer.

The protein localises to the cytoplasm. It catalyses the reaction (2R)-3-phosphoglycerate + ATP = (2R)-3-phospho-glyceroyl phosphate + ADP. It functions in the pathway carbohydrate degradation; glycolysis; pyruvate from D-glyceraldehyde 3-phosphate: step 2/5. The protein is Phosphoglycerate kinase of Francisella tularensis subsp. tularensis (strain FSC 198).